Here is a 183-residue protein sequence, read N- to C-terminus: Ion-translocating oxidoreductase complex subunit B (183 aa).

The segment at 1 to 23 (MLSALLVMAAIAVVLGAALGFAA) is hydrophobic. The 4Fe-4S domain occupies 29–88 (EGDPLVDKIDAILPQTQCGQCGYPGCKPYAQAIAQGEADINQCPPGGEEGVRKLADLLGR). The [4Fe-4S] cluster site is built by Cys46, Cys49, Cys54, Cys71, Cys113, Cys116, Cys119, Cys123, Cys143, Cys146, Cys149, and Cys153. 4Fe-4S ferredoxin-type domains are found at residues 104 to 133 (AVAY…GAAK) and 135 to 163 (MHTV…MEPV).

Belongs to the 4Fe4S bacterial-type ferredoxin family. RnfB subfamily. As to quaternary structure, the complex is composed of six subunits: RnfA, RnfB, RnfC, RnfD, RnfE and RnfG. Requires [4Fe-4S] cluster as cofactor.

It localises to the cell inner membrane. Functionally, part of a membrane-bound complex that couples electron transfer with translocation of ions across the membrane. This chain is Ion-translocating oxidoreductase complex subunit B, found in Azoarcus sp. (strain BH72).